The primary structure comprises 38 residues: Photosystem II reaction center protein L (38 aa).

A helical membrane pass occupies residues 17 to 37; that stretch reads SLYWGLLLIFVLAVPFSNYFF.

This sequence belongs to the PsbL family. As to quaternary structure, PSII is composed of 1 copy each of membrane proteins PsbA, PsbB, PsbC, PsbD, PsbE, PsbF, PsbH, PsbI, PsbJ, PsbK, PsbL, PsbM, PsbT, PsbX, PsbY, PsbZ, Psb30/Ycf12, at least 3 peripheral proteins of the oxygen-evolving complex and a large number of cofactors. It forms dimeric complexes.

It is found in the plastid. The protein localises to the chloroplast thylakoid membrane. Its function is as follows. One of the components of the core complex of photosystem II (PSII). PSII is a light-driven water:plastoquinone oxidoreductase that uses light energy to abstract electrons from H(2)O, generating O(2) and a proton gradient subsequently used for ATP formation. It consists of a core antenna complex that captures photons, and an electron transfer chain that converts photonic excitation into a charge separation. This subunit is found at the monomer-monomer interface and is required for correct PSII assembly and/or dimerization. The chain is Photosystem II reaction center protein L from Pinus thunbergii (Japanese black pine).